Here is a 207-residue protein sequence, read N- to C-terminus: MSRETGAVCRMCRRSGDKLFLKGDKCVTKCVFEKRPKPPGPQLGRPRRLSDRGQQLRQKQSIRWSYGMTERQFRRFFGLANAQPGVTGDNMMILLERRLDNVLFRLGFGTSRAQARQIVMHGHILVNGQKTDIPSYLIKEGQEITVRETSKATAYFKTLAENIEAKAIPGWLSLDRKTLSGKVISLPNAGDIDARFDAQTVVEYYSR.

Residues 35-54 (RPKPPGPQLGRPRRLSDRGQ) form a disordered region. An S4 RNA-binding domain is found at 97-163 (RRLDNVLFRL…AYFKTLAENI (67 aa)).

This sequence belongs to the universal ribosomal protein uS4 family. In terms of assembly, part of the 30S ribosomal subunit. Contacts protein S5. The interaction surface between S4 and S5 is involved in control of translational fidelity.

In terms of biological role, one of the primary rRNA binding proteins, it binds directly to 16S rRNA where it nucleates assembly of the body of the 30S subunit. With S5 and S12 plays an important role in translational accuracy. The sequence is that of Small ribosomal subunit protein uS4 from Dehalococcoides mccartyi (strain CBDB1).